The primary structure comprises 469 residues: UDP-N-acetylmuramate--L-alanine ligase (469 aa).

113–119 (GTHGKTT) contributes to the ATP binding site.

The protein belongs to the MurCDEF family.

The protein resides in the cytoplasm. It catalyses the reaction UDP-N-acetyl-alpha-D-muramate + L-alanine + ATP = UDP-N-acetyl-alpha-D-muramoyl-L-alanine + ADP + phosphate + H(+). It functions in the pathway cell wall biogenesis; peptidoglycan biosynthesis. In terms of biological role, cell wall formation. The sequence is that of UDP-N-acetylmuramate--L-alanine ligase from Neisseria meningitidis serogroup C / serotype 2a (strain ATCC 700532 / DSM 15464 / FAM18).